Here is a 473-residue protein sequence, read N- to C-terminus: Cannabinoid receptor 1 (473 aa).

Topologically, residues 1-118 are extracellular; that stretch reads MKSILDGLAD…CFMILTASQQ (118 aa). Residues 2–23 are required for mitochondrial localization; it reads KSILDGLADTTFRTITTDLLYM. Residues Asn79 and Asn85 are each glycosylated (N-linked (GlcNAc...) asparagine). The chain crosses the membrane as a helical span at residues 119–144; it reads LIIAVLSLTLGTFTVLENFLVLCVIL. Over 145–156 the chain is Cytoplasmic; that stretch reads QSRTLRCRPSYH. Residues 157–177 traverse the membrane as a helical segment; that stretch reads FIGSLAVADLLGSVIFVYSFL. Over 178–189 the chain is Extracellular; the sequence is DFHVFHRKDSSN. A helical membrane pass occupies residues 190-214; that stretch reads VFLFKLGGVTASFTASVGSLFLTAI. Residues 215 to 234 are Cytoplasmic-facing; that stretch reads DRYISIHRPLAYKRIVTRTK. A helical membrane pass occupies residues 235–257; that stretch reads AVIAFCVMWTIAIIIAVLPLLGW. The Extracellular portion of the chain corresponds to 258–275; the sequence is NCKKLKSVCSDIFPLIDE. Residues 276 to 301 form a helical membrane-spanning segment; it reads NYLMFWIGVTSILLLFIVYAYVYILW. Topologically, residues 302 to 346 are cytoplasmic; the sequence is KAHSHAVRMLQRGTQKSIIIHTSEDGKVQITRPEQTRMDIRLAKT. Residues 347 to 367 form a helical membrane-spanning segment; it reads LVLILVVLIICWGPLLAIMVY. The Extracellular portion of the chain corresponds to 368–379; it reads DVFGKMNNPIKT. The chain crosses the membrane as a helical span at residues 380–401; it reads VFAFCSMLCLMDSTVNPIIYAL. The Cytoplasmic segment spans residues 402-473; that stretch reads RSQDLRHAFL…VSTETSGEAV (72 aa). Cys417 carries the S-palmitoyl cysteine lipid modification.

Belongs to the G-protein coupled receptor 1 family. Palmitoylation at Cys-417 is important for recruitment at both plasma membrane and lipid rafts and association with G protein alpha subunits.

Its subcellular location is the cell membrane. The protein localises to the mitochondrion outer membrane. The protein resides in the cell projection. It is found in the axon. It localises to the presynapse. Hemopressin, a peptide derived from hemoglobin subunit alpha (HBA1 and/or HBA2), acts as an antagonist peptide: hemopressin-binding efficiently blocks cannabinoid receptor CNR1 and subsequent signaling. In terms of biological role, G-protein coupled receptor for cannabinoids. Mediates many cannabinoid-induced effects in the central nervous system (CNS), as well as in peripheral tissues. Regulates cellular respiration and energy production in response to cannabinoids. Signaling typically involves reduction in cyclic AMP. This Taricha granulosa (Roughskin newt) protein is Cannabinoid receptor 1 (CNR1).